Reading from the N-terminus, the 102-residue chain is Small ribosomal subunit protein bS18c (102 aa).

Positions 1 to 19 (MDKTKRPLRKSKRSFRRRL) are enriched in basic residues. A disordered region spans residues 1 to 26 (MDKTKRPLRKSKRSFRRRLPPPIGSG).

Belongs to the bacterial ribosomal protein bS18 family. In terms of assembly, part of the 30S ribosomal subunit.

Its subcellular location is the plastid. The protein resides in the chloroplast. The sequence is that of Small ribosomal subunit protein bS18c from Piper cenocladum (Ant piper).